A 318-amino-acid polypeptide reads, in one-letter code: Very-long-chain 3-oxoacyl-CoA reductase-A (318 aa).

The helical transmembrane segment at 15–35 (FWYLGVLAAAWWGLRAACCLL) threads the bilayer. NADP(+) is bound at residue 54 to 83 (GKWAVVTGATDGIGKAYAEELARRGMSIVL). The next 2 helical transmembrane spans lie at 187-207 (GVILNISSASGMYPVPLLTVY) and 281-301 (AIMGWISTSLVPVSVAISMGM). Substrate is bound at residue Ser194. The active-site Proton acceptor is the Tyr207.

The protein belongs to the short-chain dehydrogenases/reductases (SDR) family. 17-beta-HSD 3 subfamily.

The protein resides in the endoplasmic reticulum membrane. The catalysed reaction is a very-long-chain (3R)-3-hydroxyacyl-CoA + NADP(+) = a very-long-chain 3-oxoacyl-CoA + NADPH + H(+). It carries out the reaction 17beta-estradiol + NAD(+) = estrone + NADH + H(+). The enzyme catalyses 17beta-estradiol + NADP(+) = estrone + NADPH + H(+). Its pathway is lipid metabolism; fatty acid biosynthesis. The protein operates within steroid biosynthesis; estrogen biosynthesis. In terms of biological role, catalyzes the second of the four reactions of the long-chain fatty acids elongation cycle. This endoplasmic reticulum-bound enzymatic process, allows the addition of two carbons to the chain of long- and very long-chain fatty acids/VLCFAs per cycle. This enzyme has a 3-ketoacyl-CoA reductase activity, reducing 3-ketoacyl-CoA to 3-hydroxyacyl-CoA, within each cycle of fatty acid elongation. Thereby, it may participate in the production of VLCFAs of different chain lengths that are involved in multiple biological processes as precursors of membrane lipids and lipid mediators. May also catalyze the transformation of estrone (E1) into estradiol (E2) and play a role in estrogen formation. The protein is Very-long-chain 3-oxoacyl-CoA reductase-A (hsd17b12-a) of Xenopus laevis (African clawed frog).